Consider the following 199-residue polypeptide: NADH-quinone oxidoreductase subunit C (199 aa).

The protein belongs to the complex I 30 kDa subunit family. NDH-1 is composed of 14 different subunits. Subunits NuoB, C, D, E, F, and G constitute the peripheral sector of the complex.

The protein resides in the cell inner membrane. The enzyme catalyses a quinone + NADH + 5 H(+)(in) = a quinol + NAD(+) + 4 H(+)(out). In terms of biological role, NDH-1 shuttles electrons from NADH, via FMN and iron-sulfur (Fe-S) centers, to quinones in the respiratory chain. The immediate electron acceptor for the enzyme in this species is believed to be ubiquinone. Couples the redox reaction to proton translocation (for every two electrons transferred, four hydrogen ions are translocated across the cytoplasmic membrane), and thus conserves the redox energy in a proton gradient. The chain is NADH-quinone oxidoreductase subunit C from Rhodobacter capsulatus (Rhodopseudomonas capsulata).